The following is a 117-amino-acid chain: Large ribosomal subunit protein bL19 (117 aa).

This sequence belongs to the bacterial ribosomal protein bL19 family.

This protein is located at the 30S-50S ribosomal subunit interface and may play a role in the structure and function of the aminoacyl-tRNA binding site. This Shewanella pealeana (strain ATCC 700345 / ANG-SQ1) protein is Large ribosomal subunit protein bL19.